The chain runs to 313 residues: Beta-ketoacyl-[acyl-carrier-protein] synthase III (313 aa).

Catalysis depends on residues cysteine 112 and histidine 238. Positions 239 to 243 (QANIR) are ACP-binding. Asparagine 268 is an active-site residue.

This sequence belongs to the thiolase-like superfamily. FabH family. Homodimer.

It is found in the cytoplasm. It catalyses the reaction malonyl-[ACP] + acetyl-CoA + H(+) = 3-oxobutanoyl-[ACP] + CO2 + CoA. It functions in the pathway lipid metabolism; fatty acid biosynthesis. Its function is as follows. Catalyzes the condensation reaction of fatty acid synthesis by the addition to an acyl acceptor of two carbons from malonyl-ACP. Catalyzes the first condensation reaction which initiates fatty acid synthesis and may therefore play a role in governing the total rate of fatty acid production. Possesses both acetoacetyl-ACP synthase and acetyl transacylase activities. Its substrate specificity determines the biosynthesis of branched-chain and/or straight-chain of fatty acids. This chain is Beta-ketoacyl-[acyl-carrier-protein] synthase III, found in Staphylococcus saprophyticus subsp. saprophyticus (strain ATCC 15305 / DSM 20229 / NCIMB 8711 / NCTC 7292 / S-41).